The primary structure comprises 174 residues: Shikimate kinase 2 (174 aa).

ATP is bound at residue 12 to 17 (GAGKTT). 2 residues coordinate Mg(2+): Thr-16 and Asp-32. Substrate contacts are provided by Asp-34, Arg-58, and Gly-79. Positions 112–126 (AEDPEDAQRPSLTGK) are LID domain. Arg-120 provides a ligand contact to ATP. Arg-139 provides a ligand contact to substrate. Gln-155 lines the ATP pocket.

This sequence belongs to the shikimate kinase family. AroL subfamily. Monomer. It depends on Mg(2+) as a cofactor.

It is found in the cytoplasm. The enzyme catalyses shikimate + ATP = 3-phosphoshikimate + ADP + H(+). The protein operates within metabolic intermediate biosynthesis; chorismate biosynthesis; chorismate from D-erythrose 4-phosphate and phosphoenolpyruvate: step 5/7. Functionally, catalyzes the specific phosphorylation of the 3-hydroxyl group of shikimic acid using ATP as a cosubstrate. The chain is Shikimate kinase 2 from Yersinia enterocolitica serotype O:8 / biotype 1B (strain NCTC 13174 / 8081).